The chain runs to 543 residues: Carboxypeptidase Y homolog A (543 aa).

The signal sequence occupies residues 1 to 17 (MKVATSALLVGAVSASV). Positions 18 to 128 (GPQQQVLKFP…KLENYSMRTK (111 aa)) are excised as a propeptide. N122 and N213 each carry an N-linked (GlcNAc...) asparagine glycan. Cystine bridges form between C182/C421, C316/C330, C340/C363, C347/C356, and C385/C391. Residue S269 is part of the active site. The active site involves D460. N-linked (GlcNAc...) asparagine glycosylation occurs at N508. The active site involves H519.

Belongs to the peptidase S10 family.

The protein localises to the vacuole. It carries out the reaction Release of a C-terminal amino acid with broad specificity.. Its function is as follows. Vacuolar carboxypeptidase involved in degradation of small peptides. Digests preferentially peptides containing an aliphatic or hydrophobic residue in P1' position, as well as methionine, leucine or phenylalanine in P1 position of ester substrate. This is Carboxypeptidase Y homolog A (CPYA) from Leptosphaeria maculans (strain JN3 / isolate v23.1.3 / race Av1-4-5-6-7-8) (Blackleg fungus).